We begin with the raw amino-acid sequence, 633 residues long: Extracellular metalloproteinase 3 (633 aa).

The first 18 residues, M1–A18, serve as a signal peptide directing secretion. Residues H19–S246 constitute a propeptide that is removed on maturation. An N-linked (GlcNAc...) asparagine glycan is attached at N410. H429 contributes to the Zn(2+) binding site. E430 is an active-site residue. A Zn(2+)-binding site is contributed by H433. Residue N480 is glycosylated (N-linked (GlcNAc...) asparagine).

Belongs to the peptidase M36 family. The cofactor is Zn(2+).

The protein resides in the secreted. Secreted metalloproteinase probably acting as a virulence factor. This Arthroderma otae (Microsporum canis) protein is Extracellular metalloproteinase 3 (MEP3).